A 233-amino-acid chain; its full sequence is Antiholin-like protein LrgB (233 aa).

Transmembrane regions (helical) follow at residues 5–25, 33–53, 63–83, 97–117, 152–172, and 212–232; these read LGIN…VIAT, GFFL…FLKL, IGGD…AIPL, IFGG…LVAI, LTSL…AKIV, and IAVV…APIL.

The protein belongs to the CidB/LrgB family. LrgB subfamily.

It is found in the cell membrane. Its function is as follows. Inhibits the expression or activity of extracellular murein hydrolases by interacting, possibly with LrgA, with the holin-like proteins CidA and/or CidB. The LrgAB and CidAB proteins may affect the proton motive force of the membrane. May be involved in programmed cell death (PCD), possibly triggering PCD in response to antibiotics and environmental stresses. This is Antiholin-like protein LrgB from Staphylococcus epidermidis (strain ATCC 35984 / DSM 28319 / BCRC 17069 / CCUG 31568 / BM 3577 / RP62A).